We begin with the raw amino-acid sequence, 429 residues long: Glutamate-1-semialdehyde 2,1-aminomutase 2 (429 aa).

N6-(pyridoxal phosphate)lysine is present on K268.

Belongs to the class-III pyridoxal-phosphate-dependent aminotransferase family. HemL subfamily. Homodimer. Requires pyridoxal 5'-phosphate as cofactor.

The protein resides in the cytoplasm. The enzyme catalyses (S)-4-amino-5-oxopentanoate = 5-aminolevulinate. The protein operates within porphyrin-containing compound metabolism; protoporphyrin-IX biosynthesis; 5-aminolevulinate from L-glutamyl-tRNA(Glu): step 2/2. This is Glutamate-1-semialdehyde 2,1-aminomutase 2 from Listeria monocytogenes serotype 4a (strain HCC23).